An 894-amino-acid chain; its full sequence is Alpha-actinin-2 (894 aa).

The actin-binding stretch occupies residues 1-254; sequence MNQIEPGVQY…IMTYVSCFYH (254 aa). Calponin-homology (CH) domains lie at 38–142 and 151–257; these read KQQR…LRFA and TSAK…HAFA. The residue at position 237 (T237) is a Phosphothreonine. 4 Spectrin repeats span residues 281–391, 401–506, 516–627, and 637–740; these read RLME…WLLN, HLAE…ALER, QLHL…SLQE, and RLRR…EVET. 2 consecutive EF-hand domains span residues 753-788 and 789-824; these read EQMN…MGYD and LGEA…ETAD. Positions 766, 770, 777, 802, 804, and 808 each coordinate Ca(2+).

It belongs to the alpha-actinin family. Homodimer; antiparallel. Also forms heterodimers with ACTN3. Interacts with ADAM12, MYOZ1, MYOZ2 and MYOZ3. Interacts via its C-terminal region with the LDB3 PDZ domain. Interacts with XIRP2. Interacts with DST (via N-terminus). Interacts with PARVB. Interacts with SYNPO2. In terms of processing, ubiquitinated by FBXL22, leading to proteasomal degradation.

It is found in the cytoplasm. The protein resides in the myofibril. Its subcellular location is the sarcomere. The protein localises to the z line. F-actin cross-linking protein which is thought to anchor actin to a variety of intracellular structures. This is a bundling protein. In Mus musculus (Mouse), this protein is Alpha-actinin-2 (Actn2).